We begin with the raw amino-acid sequence, 238 residues long: Large ribosomal subunit protein uL5c (238 aa).

It belongs to the universal ribosomal protein uL5 family. In terms of assembly, part of the 50S ribosomal subunit; contacts the 5S rRNA.

The protein resides in the plastid. The protein localises to the chloroplast. In terms of biological role, binds 5S rRNA, forms part of the central protuberance of the 50S subunit. The chain is Large ribosomal subunit protein uL5c (rpl5) from Phaeodactylum tricornutum (strain CCAP 1055/1).